A 181-amino-acid chain; its full sequence is Acireductone dioxygenase (181 aa).

Fe(2+)-binding residues include histidine 97, histidine 99, glutamate 103, and histidine 141. Residues histidine 97, histidine 99, glutamate 103, and histidine 141 each coordinate Ni(2+).

It belongs to the acireductone dioxygenase (ARD) family. In terms of assembly, monomer. It depends on Fe(2+) as a cofactor. Requires Ni(2+) as cofactor.

It catalyses the reaction 1,2-dihydroxy-5-(methylsulfanyl)pent-1-en-3-one + O2 = 3-(methylsulfanyl)propanoate + CO + formate + 2 H(+). The catalysed reaction is 1,2-dihydroxy-5-(methylsulfanyl)pent-1-en-3-one + O2 = 4-methylsulfanyl-2-oxobutanoate + formate + 2 H(+). Its pathway is amino-acid biosynthesis; L-methionine biosynthesis via salvage pathway; L-methionine from S-methyl-5-thio-alpha-D-ribose 1-phosphate: step 5/6. In terms of biological role, catalyzes 2 different reactions between oxygen and the acireductone 1,2-dihydroxy-3-keto-5-methylthiopentene (DHK-MTPene) depending upon the metal bound in the active site. Fe-containing acireductone dioxygenase (Fe-ARD) produces formate and 2-keto-4-methylthiobutyrate (KMTB), the alpha-ketoacid precursor of methionine in the methionine recycle pathway. Ni-containing acireductone dioxygenase (Ni-ARD) produces methylthiopropionate, carbon monoxide and formate, and does not lie on the methionine recycle pathway. The chain is Acireductone dioxygenase from Pseudomonas syringae pv. tomato (strain ATCC BAA-871 / DC3000).